The primary structure comprises 335 residues: Holliday junction branch migration complex subunit RuvB (335 aa).

The segment at 1 to 181 is large ATPase domain (RuvB-L); sequence MERIIEIEKM…FGMNFWMQFY (181 aa). ATP contacts are provided by residues Leu-20, Arg-21, Gly-62, Lys-65, Thr-66, Thr-67, 128 to 130, Arg-171, Tyr-181, and Arg-218; that span reads EDF. Mg(2+) is bound at residue Thr-66. Positions 182-252 are small ATPAse domain (RuvB-S); that stretch reads NIEELSQIIT…QARYALHELG (71 aa). Positions 255–335 are head domain (RuvB-H); sequence DHGFDDLDLR…LPFEPNATLF (81 aa). DNA-binding residues include Arg-309 and Arg-314.

This sequence belongs to the RuvB family. As to quaternary structure, homohexamer. Forms an RuvA(8)-RuvB(12)-Holliday junction (HJ) complex. HJ DNA is sandwiched between 2 RuvA tetramers; dsDNA enters through RuvA and exits via RuvB. An RuvB hexamer assembles on each DNA strand where it exits the tetramer. Each RuvB hexamer is contacted by two RuvA subunits (via domain III) on 2 adjacent RuvB subunits; this complex drives branch migration. In the full resolvosome a probable DNA-RuvA(4)-RuvB(12)-RuvC(2) complex forms which resolves the HJ.

It localises to the cytoplasm. It carries out the reaction ATP + H2O = ADP + phosphate + H(+). In terms of biological role, the RuvA-RuvB-RuvC complex processes Holliday junction (HJ) DNA during genetic recombination and DNA repair, while the RuvA-RuvB complex plays an important role in the rescue of blocked DNA replication forks via replication fork reversal (RFR). RuvA specifically binds to HJ cruciform DNA, conferring on it an open structure. The RuvB hexamer acts as an ATP-dependent pump, pulling dsDNA into and through the RuvAB complex. RuvB forms 2 homohexamers on either side of HJ DNA bound by 1 or 2 RuvA tetramers; 4 subunits per hexamer contact DNA at a time. Coordinated motions by a converter formed by DNA-disengaged RuvB subunits stimulates ATP hydrolysis and nucleotide exchange. Immobilization of the converter enables RuvB to convert the ATP-contained energy into a lever motion, pulling 2 nucleotides of DNA out of the RuvA tetramer per ATP hydrolyzed, thus driving DNA branch migration. The RuvB motors rotate together with the DNA substrate, which together with the progressing nucleotide cycle form the mechanistic basis for DNA recombination by continuous HJ branch migration. Branch migration allows RuvC to scan DNA until it finds its consensus sequence, where it cleaves and resolves cruciform DNA. The chain is Holliday junction branch migration complex subunit RuvB from Wolinella succinogenes (strain ATCC 29543 / DSM 1740 / CCUG 13145 / JCM 31913 / LMG 7466 / NCTC 11488 / FDC 602W) (Vibrio succinogenes).